Reading from the N-terminus, the 818-residue chain is Serine/threonine-protein phosphatase 4 regulatory subunit 3 (818 aa).

The region spanning 1–100 is the WH1 domain; the sequence is MTDTRRRVKV…DEIWEKICQV (100 aa). A compositionally biased stretch (acidic residues) spans 670–681; the sequence is FNTDEEDLEDGE. Residues 670 to 818 are disordered; that stretch reads FNTDEEDLED…PLSKKSKLSS (149 aa). Residues 703–718 are compositionally biased toward basic and acidic residues; that stretch reads FMERKKLKDSEEKEVL. Residues 729 to 775 show a composition bias toward low complexity; it reads SPSFKLSFSSSPKASLSSPPTASLHPGSPGSPSSPGTGARSSPPSAA. Ser-769 and Ser-770 each carry phosphoserine. Over residues 788–803 the composition is skewed to acidic residues; the sequence is YPDDDEEDEDEEDADS.

It belongs to the SMEK family. As to quaternary structure, serine/threonine-protein phosphatase 4 (PP4) occurs in different assemblies of the catalytic and one or more regulatory subunits.

In terms of biological role, regulatory subunit of serine/threonine-protein phosphatase 4. In Danio rerio (Zebrafish), this protein is Serine/threonine-protein phosphatase 4 regulatory subunit 3 (smek1).